Consider the following 366-residue polypeptide: Purple acid phosphatase 3 (366 aa).

The signal sequence occupies residues 1–32; sequence MTYIYRDTKITTKSTIPFLIFFLFCFSNLSMA. Asp-81 lines the Fe cation pocket. Residue Asn-89 is glycosylated (N-linked (GlcNAc...) asparagine). 2 residues coordinate Fe cation: Asp-114 and Tyr-117. Residue Asp-114 participates in Zn(2+) binding. The Zn(2+) site is built by Asn-152 and His-246. His-255 (proton donor) is an active-site residue. Residue His-281 participates in Zn(2+) binding. 281–283 is a binding site for substrate; that stretch reads HDH. His-283 serves as a coordination point for Fe cation.

The protein belongs to the metallophosphoesterase superfamily. Purple acid phosphatase family. As to quaternary structure, homodimer. Fe cation serves as cofactor. It depends on Zn(2+) as a cofactor. In terms of tissue distribution, expressed in stems, leaves, flowers and siliques.

The protein localises to the secreted. It carries out the reaction a phosphate monoester + H2O = an alcohol + phosphate. In Arabidopsis thaliana (Mouse-ear cress), this protein is Purple acid phosphatase 3 (PAP3).